The following is a 339-amino-acid chain: Probable cytosolic iron-sulfur protein assembly protein CIAO1 (339 aa).

WD repeat units follow at residues 14-53 (HPDS…WICK), 59-98 (GHQR…FECV), 103-142 (GHEN…EYEC), 148-187 (SHTQ…WVCC), 192-231 (GHES…NEQG), 250-289 (FHSR…DPQQ), and 301-339 (AHSQ…PEGL). The short motif at 176-178 (LYR) is the LYR motif; required for interaction with HSC20 element.

Belongs to the WD repeat CIA1 family. In terms of assembly, component of the CIA complex. Interacts with CIAO2A and forms a complex with CIAO2B and MMS19; the interactions with CIAO2A and CIAO2B are mutually exclusive. Interacts with CHD1L, ERCC2, IREB2 and POLD1. Component of the MMXD complex, which includes CIAO1, ERCC2, CIAO2B, MMS19 and SLC25A5. Interacts with WT1. Interacts with CIAO3. Interacts (via LYR motif) with HSC20.

It localises to the cytoplasm. Its function is as follows. Key component of the cytosolic iron-sulfur protein assembly (CIA) complex, a multiprotein complex that mediates the incorporation of iron-sulfur cluster into extramitochondrial Fe/S proteins. As a CIA complex component, interacts specifically with CIAO2A or CIAO2B and MMS19 to assist different branches of iron-sulfur protein assembly, depending of its interactors. The complex CIAO1:CIAO2B:MMS19 binds to and facilitates the assembly of most cytosolic-nuclear Fe/S proteins. CIAO1:CIAO2A specifically matures ACO1 and stabilizes IREB2. Seems to specifically modulate the transactivation activity of WT1. As part of the mitotic spindle-associated MMXD complex it may play a role in chromosome segregation. This Homo sapiens (Human) protein is Probable cytosolic iron-sulfur protein assembly protein CIAO1.